Consider the following 968-residue polypeptide: Protein translocase subunit SecA 1 (968 aa).

ATP is bound by residues Gln86, 104–108 (GEGKT), and Asp493. 2 stretches are compositionally biased toward basic and acidic residues: residues 858–868 (EAEKTEDKAED) and 883–898 (ESAK…ESVA). Residues 858-968 (EAEKTEDKAE…KCHGAPKSRV (111 aa)) are disordered. Cys949, Cys951, Cys960, and His961 together coordinate Zn(2+). Over residues 955 to 968 (KKYKKCHGAPKSRV) the composition is skewed to basic residues.

Belongs to the SecA family. In terms of assembly, monomer and homodimer. Part of the essential Sec protein translocation apparatus which comprises SecA, SecYEG and auxiliary proteins SecDF. Other proteins may also be involved. It depends on Zn(2+) as a cofactor.

It localises to the cell membrane. Its subcellular location is the cytoplasm. It catalyses the reaction ATP + H2O + cellular proteinSide 1 = ADP + phosphate + cellular proteinSide 2.. Part of the Sec protein translocase complex. Interacts with the SecYEG preprotein conducting channel. Has a central role in coupling the hydrolysis of ATP to the transfer of proteins into and across the cell membrane, serving as an ATP-driven molecular motor driving the stepwise translocation of polypeptide chains across the membrane. The polypeptide is Protein translocase subunit SecA 1 (Thermobifida fusca (strain YX)).